We begin with the raw amino-acid sequence, 683 residues long: Probable potassium transport system protein Kup 1 (683 aa).

The next 12 membrane-spanning stretches (helical) occupy residues 13–33 (GLLIAIGIVYGDIGTSPLYVM), 55–75 (ISLVLWTVTLLTTLQTVFIAL), 98–118 (WLVLPALIGGAAILADGTLTP), 139–159 (VPVSTQGTVIAITVVILLLLF), 168–188 (IIGKAFGPIMFIWFTFLGVIG), 218–238 (AGIFILGSIFLATTGAEALYS), 251–271 (SWPYVFVCLSLNYFGQGVWIL), 296–316 (LAAIVLATIAAVIASQALITG), 345–365 (IYIPSVNKMICAATIAIVLFF), 376–396 (GLSITISMLMTTILLYEWLAM), 401–421 (TIWNWLFLIFFGFLDVMFMLA), and 426–446 (FMHGGYVSLVIAGFIGIIMYV).

The protein belongs to the HAK/KUP transporter (TC 2.A.72) family.

It is found in the cell membrane. The enzyme catalyses K(+)(in) + H(+)(in) = K(+)(out) + H(+)(out). Transport of potassium into the cell. Likely operates as a K(+):H(+) symporter. The protein is Probable potassium transport system protein Kup 1 of Lactobacillus johnsonii (strain CNCM I-12250 / La1 / NCC 533).